Reading from the N-terminus, the 543-residue chain is Chaperonin GroEL (543 aa).

Residues 29-32, 86-90, Gly-413, 478-480, and Asp-494 contribute to the ATP site; these read TLGP, DGTTT, and NAA.

It belongs to the chaperonin (HSP60) family. As to quaternary structure, forms a cylinder of 14 subunits composed of two heptameric rings stacked back-to-back. Interacts with the co-chaperonin GroES.

It is found in the cytoplasm. The catalysed reaction is ATP + H2O + a folded polypeptide = ADP + phosphate + an unfolded polypeptide.. In terms of biological role, together with its co-chaperonin GroES, plays an essential role in assisting protein folding. The GroEL-GroES system forms a nano-cage that allows encapsulation of the non-native substrate proteins and provides a physical environment optimized to promote and accelerate protein folding. The sequence is that of Chaperonin GroEL from Lactobacillus gasseri (strain ATCC 33323 / DSM 20243 / BCRC 14619 / CIP 102991 / JCM 1131 / KCTC 3163 / NCIMB 11718 / NCTC 13722 / AM63).